We begin with the raw amino-acid sequence, 235 residues long: Secretory carrier-associated membrane protein 5 (235 aa).

At 1–39 the chain is on the cytoplasmic side; it reads MAEKVNNFPPLPKFIPLKPCFYQDFEADIPPQHVSMTKR. Residues 40–60 form a helical membrane-spanning segment; the sequence is LYYLWMLNSVTLAVNLVGCLA. Topologically, residues 61 to 67 are extracellular; sequence WLIGGGG. A helical transmembrane segment spans residues 68–88; that stretch reads ATNFGLAFLWLILFTPCSYVC. At 89–102 the chain is on the cytoplasmic side; sequence WFRPIYKAFKTDSS. Residues 103–125 form a helical membrane-spanning segment; it reads FSFMAFFFTFMAQLVISIIQAVG. At 126–148 the chain is on the extracellular side; sequence IPGWGVCGWIATISFFGTNIGSA. Residues 149-169 traverse the membrane as a helical segment; it reads VVMLIPTVMFTVMAVFSFIAL. At 170-235 the chain is on the cytoplasmic side; sequence SMVHKFYRGS…TPNYTYSNEM (66 aa).

This sequence belongs to the SCAMP family. SCAMP5 subfamily. Interacts (via C-terminal part) with SYT1 and SYT2; interaction with synaptotagmins making a link with the SNARE molecules. Interacts with SLC9A7. In terms of tissue distribution, expressed both by neuronal and non-neuronal tissues. Expressed in brain, stomach, thyroid, spinal cord, lymph node, trachea, adrenal gland, bone marrow and in the different parts of brain. In thyroid tissues, it is expressed by the follicular epithelial cells. In the adrenal gland tissues it is detected in the zona fasciculata of the cortex region (at protein level).

It localises to the cell membrane. The protein localises to the golgi apparatus membrane. Its subcellular location is the golgi apparatus. The protein resides in the trans-Golgi network membrane. It is found in the recycling endosome membrane. It localises to the cytoplasmic vesicle. The protein localises to the secretory vesicle. Its subcellular location is the synaptic vesicle membrane. Required for the calcium-dependent exocytosis of signal sequence-containing cytokines such as CCL5. Probably acts in cooperation with the SNARE machinery. May play a role in accumulation of expanded polyglutamine (polyQ) protein huntingtin (HTT) in case of endoplasmic reticulum stress by inhibiting the endocytosis pathway. The sequence is that of Secretory carrier-associated membrane protein 5 (SCAMP5) from Homo sapiens (Human).